The chain runs to 84 residues: Beta-cardiotoxin CTX14 (84 aa).

The first 21 residues, 1–21, serve as a signal peptide directing secretion; it reads MKTLLLTLVVVTIVCLDLGYT. Intrachain disulfides connect Cys-24/Cys-43, Cys-36/Cys-61, Cys-65/Cys-76, and Cys-77/Cys-82.

It belongs to the three-finger toxin family. Short-chain subfamily. Aminergic toxin sub-subfamily. Expressed by the venom gland.

Its subcellular location is the secreted. Its function is as follows. Acts as a beta-blocker by binding to beta-1 and beta-2 adrenergic receptors (ADRB1 and ADRB2). It dose-dependently decreases the heart rate (bradycardia), whereas conventional cardiotoxins increases it. At 100 mg/kg, intraperitoneal injection into mice provokes labored breathing, impaired locomotion, lack of response to external stimuli, and death (after 30 minutes). The protein is Beta-cardiotoxin CTX14 of Ophiophagus hannah (King cobra).